The following is a 159-amino-acid chain: S-ribosylhomocysteine lyase (159 aa).

H53, H57, and C124 together coordinate Fe cation.

It belongs to the LuxS family. As to quaternary structure, homodimer. The cofactor is Fe cation.

The enzyme catalyses S-(5-deoxy-D-ribos-5-yl)-L-homocysteine = (S)-4,5-dihydroxypentane-2,3-dione + L-homocysteine. Its function is as follows. Involved in the synthesis of autoinducer 2 (AI-2) which is secreted by bacteria and is used to communicate both the cell density and the metabolic potential of the environment. The regulation of gene expression in response to changes in cell density is called quorum sensing. Catalyzes the transformation of S-ribosylhomocysteine (RHC) to homocysteine (HC) and 4,5-dihydroxy-2,3-pentadione (DPD). This Clostridium beijerinckii (strain ATCC 51743 / NCIMB 8052) (Clostridium acetobutylicum) protein is S-ribosylhomocysteine lyase.